The following is a 192-amino-acid chain: NOP protein chaperone 1 (192 aa).

Low complexity predominate over residues 1–26 (MEVSGESHSGPSCSSSSRDGSGVSVS). The interval 1–39 (MEVSGESHSGPSCSSSSRDGSGVSVSKELLMAGSGGRGG) is disordered. Residues Ser34 and Ser66 each carry the phosphoserine modification. Positions 118-192 (FEMNQSHSKE…SENKEKQENK (75 aa)) are disordered. A compositionally biased stretch (acidic residues) spans 129-152 (DSSEENSQDSSEESSESEDEDDST). A compositionally biased stretch (basic and acidic residues) spans 164-177 (KLPHSEDGKGKIEV). Ser180 carries the phosphoserine modification.

As to quaternary structure, interacts with NOP58, RUVBL1 and RUVBL2; the interactions are direct and NOPCHAP1 bridges the association of NOP58 with RUVBL1:RUVBL2 even in absence of snoRNAs. The interactions with RUVBL1 and RUVBL2 are disrupted upon ATP binding.

It localises to the nucleus. Its function is as follows. Client-loading PAQosome/R2TP complex cofactor that selects NOP58 to promote box C/D small nucleolar ribonucleoprotein (snoRNP) assembly. Acts as a bridge between NOP58 and the R2TP complex via RUVBL1:RUVBL2. This is NOP protein chaperone 1 (NOPCHAP1) from Bos taurus (Bovine).